The following is a 420-amino-acid chain: Tryptophan synthase beta chain (420 aa).

An N6-(pyridoxal phosphate)lysine modification is found at Lys-112.

This sequence belongs to the TrpB family. In terms of assembly, tetramer of two alpha and two beta chains. Pyridoxal 5'-phosphate is required as a cofactor.

The enzyme catalyses (1S,2R)-1-C-(indol-3-yl)glycerol 3-phosphate + L-serine = D-glyceraldehyde 3-phosphate + L-tryptophan + H2O. It participates in amino-acid biosynthesis; L-tryptophan biosynthesis; L-tryptophan from chorismate: step 5/5. Its function is as follows. The beta subunit is responsible for the synthesis of L-tryptophan from indole and L-serine. The sequence is that of Tryptophan synthase beta chain from Thermosipho africanus (strain TCF52B).